Here is a 604-residue protein sequence, read N- to C-terminus: Elongation factor 4 (604 aa).

In terms of domain architecture, tr-type G spans 7–189 (SRIRNFSIIA…SIVHLVPPPD (183 aa)). Residues 19-24 (DHGKST) and 136-139 (NKID) each bind GTP.

Belongs to the TRAFAC class translation factor GTPase superfamily. Classic translation factor GTPase family. LepA subfamily.

The protein resides in the cell inner membrane. The catalysed reaction is GTP + H2O = GDP + phosphate + H(+). Its function is as follows. Required for accurate and efficient protein synthesis under certain stress conditions. May act as a fidelity factor of the translation reaction, by catalyzing a one-codon backward translocation of tRNAs on improperly translocated ribosomes. Back-translocation proceeds from a post-translocation (POST) complex to a pre-translocation (PRE) complex, thus giving elongation factor G a second chance to translocate the tRNAs correctly. Binds to ribosomes in a GTP-dependent manner. This chain is Elongation factor 4, found in Gloeothece citriformis (strain PCC 7424) (Cyanothece sp. (strain PCC 7424)).